Reading from the N-terminus, the 363-residue chain is UDP-N-acetylglucosamine--N-acetylmuramyl-(pentapeptide) pyrophosphoryl-undecaprenol N-acetylglucosamine transferase (363 aa).

Residues 10-12 (TGG), Asn-124, Ser-195, Ile-250, and Gln-295 contribute to the UDP-N-acetyl-alpha-D-glucosamine site.

The protein belongs to the glycosyltransferase 28 family. MurG subfamily.

It is found in the cell membrane. The catalysed reaction is Mur2Ac(oyl-L-Ala-gamma-D-Glu-L-Lys-D-Ala-D-Ala)-di-trans,octa-cis-undecaprenyl diphosphate + UDP-N-acetyl-alpha-D-glucosamine = beta-D-GlcNAc-(1-&gt;4)-Mur2Ac(oyl-L-Ala-gamma-D-Glu-L-Lys-D-Ala-D-Ala)-di-trans,octa-cis-undecaprenyl diphosphate + UDP + H(+). It functions in the pathway cell wall biogenesis; peptidoglycan biosynthesis. Functionally, cell wall formation. Catalyzes the transfer of a GlcNAc subunit on undecaprenyl-pyrophosphoryl-MurNAc-pentapeptide (lipid intermediate I) to form undecaprenyl-pyrophosphoryl-MurNAc-(pentapeptide)GlcNAc (lipid intermediate II). The protein is UDP-N-acetylglucosamine--N-acetylmuramyl-(pentapeptide) pyrophosphoryl-undecaprenol N-acetylglucosamine transferase of Lactiplantibacillus plantarum (strain ATCC BAA-793 / NCIMB 8826 / WCFS1) (Lactobacillus plantarum).